The sequence spans 87 residues: DNA/RNA-binding protein Alba (87 aa).

N6-acetyllysine is present on lysine 9.

Belongs to the histone-like Alba family. Post-translationally, acetylated. Acetylation at Lys-9 decreases DNA-binding affinity.

It is found in the cytoplasm. It localises to the chromosome. In terms of biological role, binds double-stranded DNA tightly but without sequence specificity. Involved in DNA compaction. The chain is DNA/RNA-binding protein Alba from Methanocaldococcus jannaschii (strain ATCC 43067 / DSM 2661 / JAL-1 / JCM 10045 / NBRC 100440) (Methanococcus jannaschii).